Here is a 185-residue protein sequence, read N- to C-terminus: Uroplakin-2 (185 aa).

An N-terminal signal peptide occupies residues 1–26 (MASPWPVWTLSWILILLAVLVPGAAA). A propeptide spanning residues 27 to 85 (DFNISSLSGLLSPVMTESLLVALPPCHLTGGNATLTVRRANDSKVVRSSFVVPPCRGRR) is cleaved from the precursor. N-linked (GlcNAc...) asparagine glycosylation is found at Asn-29, Asn-58, and Asn-67. At 86–156 (ELVSVVDSGS…IGLAMARTGG (71 aa)) the chain is on the lumenal side. A helical membrane pass occupies residues 157-177 (MVVITVLLSVAMFLLVLGLII). Residues 178–185 (ALALGARK) are Cytoplasmic-facing.

The protein belongs to the uroplakin-2 family. In terms of assembly, interacts with uroplakin-1a (UPK1A). In terms of tissue distribution, bladder epithelium.

The protein localises to the cell membrane. Component of the asymmetric unit membrane (AUM); a highly specialized biomembrane elaborated by terminally differentiated urothelial cells. May play an important role in regulating the assembly of the AUM. The chain is Uroplakin-2 (UPK2) from Bos taurus (Bovine).